A 239-amino-acid chain; its full sequence is MAKPCGVRLSGEARKQVDVFRQNLFQEAEEFLYRFLPQKIIYLSQLLQEDSLNVTDLTSLRAPLDIPIPDPPPKDDEMETDKQEKKEVPKCGFLPGNEKILALLGLVKPEVWTLKEKCILVITWIQHLIPKIEDGNDFGVAVQEKVLERVNAVKTKVEAFQTTISKYFSERGDAVAKASKETHVMDYRALVHERDEAAHGELRAMVLDLRAFYAELYHIISSNLEKIVDPKGEEKPSMY.

Ala-2 is modified (N-acetylalanine). Position 10 is a phosphoserine (Ser-10). The tract at residues 65-86 is disordered; that stretch reads DIPIPDPPPKDDEMETDKQEKK. A compositionally biased stretch (basic and acidic residues) spans 72 to 86; it reads PPKDDEMETDKQEKK.

The protein belongs to the PA28 family. In terms of assembly, heterodimer of PSME1 and PSME2, which forms a hexameric ring.

Functionally, implicated in immunoproteasome assembly and required for efficient antigen processing. The PA28 activator complex enhances the generation of class I binding peptides by altering the cleavage pattern of the proteasome. This is Proteasome activator complex subunit 2 (PSME2) from Sus scrofa (Pig).